Here is a 461-residue protein sequence, read N- to C-terminus: MYGKIERIHFVGIGGIGMSGIAEVLLNLGYKVSGSDLRGSEITQRLESLGGEIFFGHAAENVANADVVVISSAVHEDNPEVVEAHLRLIPVIPRAEMLAELMRMKYGIAVAGTHGKTTTTSMVATILSKGGIDPTIVIGGRLNSLGTNARLGQGQFLVAEADESDGSFLLLSPTIAVVTNIDADHLDFYSGIEEIKDTFVEFINKIPFYGLAVLCLDNGNVADVLPRVKKRFTSYGLSAQADFRATDVRLSGFSTSFVAHHKGVRLGEITFSMPGAHNVLNALAAIAVAMELDIPFETIQEGFAGFGGVGRRFHLKGEANGIMVVDDYGHHPTEIKATLGAAKAGFAENRLVVVFQPHRYSRTKELFEDFVKAFHDADVLILTDIYPAGEAPIEGVTAEALANRVRRHGQRDVTWISDRDKLCEHLERVLAPGDILLTLGAGNVWQVGETMLLRLKAAKES.

ATP is bound at residue 112–118 (GTHGKTT).

Belongs to the MurCDEF family.

Its subcellular location is the cytoplasm. It catalyses the reaction UDP-N-acetyl-alpha-D-muramate + L-alanine + ATP = UDP-N-acetyl-alpha-D-muramoyl-L-alanine + ADP + phosphate + H(+). Its pathway is cell wall biogenesis; peptidoglycan biosynthesis. Functionally, cell wall formation. This is UDP-N-acetylmuramate--L-alanine ligase from Geobacter sp. (strain M21).